The primary structure comprises 682 residues: MQDSVFRIESEYVPRGDQPEAITQLSDNIRAGVAHQVLLGVTGSGKTFTMAHTIERCQRPALILAPNKTLAAQLYNEFRALFPHNAVEYFVSYYDYYQPEAYVPTSDTYIEKDSSINDNIDKLRHAATHALLTRRDVIIIASVSCIYGLGSPEYYAKMVIPVEAGQHMSMDSLIGRLVDVQYERNDYDFHRGTFRVRGDVLEVIPAYHHERALRLEFFGDEIDSIKEIDPLTGNVLGDVGKTVIYPASHYVSDRDNLNRAVSDIREELRLRLEEYRQGNRLVEAQRLEQRTMLDLEMIEEMGYCTGIENYSRHLDGRTAGEPPACLLDYFPDNFILFVDESHITVSQVGAMYKGDRSRKQTLVDFGFRLPSALDNRPLEFSEFEKRLNQVVYVSATPSRWELDRSEGIVVEQIIRPTGLLDPLTEVRPTKGQMEDLMTECRSRTARDERVLVTTLTKRMAEDLTEYLTSMGVSARYLHSDIDTMERMAIIQALRRKEFDVLVGINLLREGLDIPEVSLVAILDADKEGFLRSTGSLIQTFGRAARNVDGRVIMYADSVTRSMTAAMQETERRREKQRLYNEEHGIEPVSVRKSLETPFDTLYSDARSAAAKGRGKGRGRQAAPAQTAAEDTTAYGISAEELGGLIQRLEREMRESARDLEFEKAAELRDRIRMLRERLLQQD.

One can recognise a Helicase ATP-binding domain in the interval 27 to 414 (DNIRAGVAHQ…SEGIVVEQII (388 aa)). 40–47 (GVTGSGKT) provides a ligand contact to ATP. Residues 93–116 (YYDYYQPEAYVPTSDTYIEKDSSI) carry the Beta-hairpin motif. The Helicase C-terminal domain maps to 432-594 (QMEDLMTECR…IEPVSVRKSL (163 aa)). The disordered stretch occupies residues 609–628 (AAKGRGKGRGRQAAPAQTAA). The UVR domain occupies 642–677 (GGLIQRLEREMRESARDLEFEKAAELRDRIRMLRER).

It belongs to the UvrB family. As to quaternary structure, forms a heterotetramer with UvrA during the search for lesions. Interacts with UvrC in an incision complex.

It is found in the cytoplasm. Functionally, the UvrABC repair system catalyzes the recognition and processing of DNA lesions. A damage recognition complex composed of 2 UvrA and 2 UvrB subunits scans DNA for abnormalities. Upon binding of the UvrA(2)B(2) complex to a putative damaged site, the DNA wraps around one UvrB monomer. DNA wrap is dependent on ATP binding by UvrB and probably causes local melting of the DNA helix, facilitating insertion of UvrB beta-hairpin between the DNA strands. Then UvrB probes one DNA strand for the presence of a lesion. If a lesion is found the UvrA subunits dissociate and the UvrB-DNA preincision complex is formed. This complex is subsequently bound by UvrC and the second UvrB is released. If no lesion is found, the DNA wraps around the other UvrB subunit that will check the other stand for damage. This chain is UvrABC system protein B, found in Oleidesulfovibrio alaskensis (strain ATCC BAA-1058 / DSM 17464 / G20) (Desulfovibrio alaskensis).